The sequence spans 90 residues: Small ribosomal subunit protein bS16 (90 aa).

Belongs to the bacterial ribosomal protein bS16 family.

This chain is Small ribosomal subunit protein bS16, found in Shouchella clausii (strain KSM-K16) (Alkalihalobacillus clausii).